A 306-amino-acid polypeptide reads, in one-letter code: Curved DNA-binding protein (306 aa).

A J domain is found at 5–69 (DYYAIMGVKP…QRRAEYDQMW (65 aa)).

The protein localises to the cytoplasm. The protein resides in the nucleoid. Its function is as follows. DNA-binding protein that preferentially recognizes a curved DNA sequence. It is probably a functional analog of DnaJ; displays overlapping activities with DnaJ, but functions under different conditions, probably acting as a molecular chaperone in an adaptive response to environmental stresses other than heat shock. Lacks autonomous chaperone activity; binds native substrates and targets them for recognition by DnaK. Its activity is inhibited by the binding of CbpM. The chain is Curved DNA-binding protein from Escherichia coli (strain 55989 / EAEC).